We begin with the raw amino-acid sequence, 385 residues long: Probable protein phosphatase 2C 38 (385 aa).

A PPM-type phosphatase domain is found at 46–357 (VAGEFSMSVI…DDITVIVVFL (312 aa)). S77 is subject to Phosphoserine. The Mn(2+) site is built by D88, G89, D289, and D348.

It belongs to the PP2C family. Interacts with BIK1. The cofactor is Mg(2+). Requires Mn(2+) as cofactor. Phosphorylation at Ser-77 induces dissociation of PP2C38 from BIK1.

It localises to the cell membrane. It carries out the reaction O-phospho-L-seryl-[protein] + H2O = L-seryl-[protein] + phosphate. The catalysed reaction is O-phospho-L-threonyl-[protein] + H2O = L-threonyl-[protein] + phosphate. Its function is as follows. May dephosphorylate and repress plasma membrane H(+)-ATPases (PM H(+)-ATPases, e.g. AHA1 and AHA2), thus influencing negatively plant growth and fitness. Involved in pathogen-associated molecular pattern (PAMP)-triggered immunity (PTI) signaling. Negatively regulates immune responses by controlling the phosphorylation and activation status of BIK1, a central rate-limiting kinase in PTI signaling. Impairs the phosphorylation of the NADPH oxidase RBOHD by BIK1. The sequence is that of Probable protein phosphatase 2C 38 from Arabidopsis thaliana (Mouse-ear cress).